The primary structure comprises 108 residues: uncharacterized protein (108 aa).

The protein belongs to the UPF0440 family.

This is an uncharacterized protein from Thermococcus kodakarensis (strain ATCC BAA-918 / JCM 12380 / KOD1) (Pyrococcus kodakaraensis (strain KOD1)).